Consider the following 63-residue polypeptide: Conotoxin TeAr193 (63 aa).

The first 22 residues, 1-22 (MRCLPVFVILLLLIASAPSVDA), serve as a signal peptide directing secretion. Positions 23–48 (QPKTKDDIPQASFLDNAKRYLQVLES) are excised as a propeptide.

It belongs to the conotoxin T superfamily. In terms of processing, contains 2 disulfide bonds that can be either 'C1-C3, C2-C4' or 'C1-C4, C2-C3', since these disulfide connectivities have been observed for conotoxins with cysteine framework V (for examples, see AC P0DQQ7 and AC P81755). In terms of tissue distribution, expressed by the venom duct.

The protein resides in the secreted. This chain is Conotoxin TeAr193, found in Conus textile (Cloth-of-gold cone).